The chain runs to 537 residues: GTPase LSG1-1 (537 aa).

A CP-type G domain is found at 158-362 (WRQLWRVLER…LCDCPGLVFP (205 aa)). The short motif at 176–180 (DARDP) is the DARXP motif element. Residues 206 to 209 (NKAD) form a G4 region. 206-209 (NKAD) contacts GTP. A G5 region spans residues 234 to 236 (SAK). The G1 stretch occupies residues 311–318 (GYPNVGKS). GTP is bound at residue 314–319 (NVGKSS). A G2 region spans residues 337-341 (GKTKH). The interval 355–358 (DCPG) is G3. A GTP-binding site is contributed by glycine 358. Residues 484–508 (LGAETREGSQTEKKGEEAPSLGLDQ) form a disordered region. Residues 487–500 (ETREGSQTEKKGEE) are compositionally biased toward basic and acidic residues.

This sequence belongs to the TRAFAC class YlqF/YawG GTPase family. In terms of tissue distribution, ubiquitous, with the highest expression in stem and hypsophyll on day 66.

Its subcellular location is the cytoplasm. Its function is as follows. GTPase that might be redundant with LSG1-2 for ribosome biogenesis. Binds to 23S rRNA. This is GTPase LSG1-1 from Arabidopsis thaliana (Mouse-ear cress).